The following is a 110-amino-acid chain: UPF0122 protein SE_0911 (110 aa).

Belongs to the UPF0122 family.

Might take part in the signal recognition particle (SRP) pathway. This is inferred from the conservation of its genetic proximity to ftsY/ffh. May be a regulatory protein. The sequence is that of UPF0122 protein SE_0911 from Staphylococcus epidermidis (strain ATCC 12228 / FDA PCI 1200).